The sequence spans 556 residues: Formate--tetrahydrofolate ligase 1 (556 aa).

65 to 72 provides a ligand contact to ATP; the sequence is TPAGEGKS.

It belongs to the formate--tetrahydrofolate ligase family.

The catalysed reaction is (6S)-5,6,7,8-tetrahydrofolate + formate + ATP = (6R)-10-formyltetrahydrofolate + ADP + phosphate. The protein operates within one-carbon metabolism; tetrahydrofolate interconversion. The sequence is that of Formate--tetrahydrofolate ligase 1 from Streptococcus pyogenes serotype M28 (strain MGAS6180).